A 277-amino-acid polypeptide reads, in one-letter code: SF-assemblin (277 aa).

The interval M1–S20 is disordered. The tract at residues M1–G27 is nonhelical region. A rod region spans residues S28–A277. Residues R70–Q90 are a coiled coil.

Belongs to the SF-assemblin family. In terms of processing, the N-terminus is blocked.

It is found in the cytoplasm. Its subcellular location is the cytoskeleton. Its function is as follows. Major component of the striated microtubule-associated fibers (SMAFs; system-I-fibers). The chain is SF-assemblin from Dunaliella bioculata (Green alga).